The following is a 463-amino-acid chain: Asparagine--tRNA ligase (463 aa).

It belongs to the class-II aminoacyl-tRNA synthetase family. In terms of assembly, homodimer.

The protein resides in the cytoplasm. It carries out the reaction tRNA(Asn) + L-asparagine + ATP = L-asparaginyl-tRNA(Asn) + AMP + diphosphate + H(+). The sequence is that of Asparagine--tRNA ligase from Clostridium acetobutylicum (strain ATCC 824 / DSM 792 / JCM 1419 / IAM 19013 / LMG 5710 / NBRC 13948 / NRRL B-527 / VKM B-1787 / 2291 / W).